Consider the following 967-residue polypeptide: Phosphoenolpyruvate carboxylase 2 (967 aa).

Ser13 carries the phosphoserine modification. Catalysis depends on residues His174 and Lys602.

This sequence belongs to the PEPCase type 1 family. As to quaternary structure, homotetramer. Mg(2+) serves as cofactor.

The protein localises to the cytoplasm. The catalysed reaction is oxaloacetate + phosphate = phosphoenolpyruvate + hydrogencarbonate. The protein operates within photosynthesis; C3 acid pathway. By light-reversible phosphorylation. Its function is as follows. Through the carboxylation of phosphoenolpyruvate (PEP) it forms oxaloacetate, a four-carbon dicarboxylic acid source for the tricarboxylic acid cycle. The protein is Phosphoenolpyruvate carboxylase 2 (PEP4) of Zea mays (Maize).